The sequence spans 1059 residues: DNA (cytosine-5)-methyltransferase CMT1 (1059 aa).

Disordered regions lie at residues 1 to 196 (MVPE…GALA) and 230 to 272 (CVGE…DEAR). A compositionally biased stretch (acidic residues) spans 29 to 41 (AEAEAVADLDEID). 3 stretches are compositionally biased toward basic and acidic residues: residues 42–79 (REMSRAESRKRQRRTAKEKPGARKGATEWKPEDVEKAA), 92–129 (REMPRPELRKRQRRTAKEKPSAHEGATEWKPEDVEKAA), and 147–157 (SRGKRQRGVEK). Residues 158 to 167 (VKRRTRKKTA) show a composition bias toward basic residues. The span at 252 to 262 (RRVEDSDDHFV) shows a compositional bias: basic and acidic residues. Residues 312-436 (EIYHLDDDVY…VAYSTFANLP (125 aa)) enclose the BAH domain. One can recognise an SAM-dependent MTase C5-type domain in the interval 479-1017 (ASLLDLYSGC…YALGLAYRGE (539 aa)). Residues 584–649 (FDVEELLEIC…KGHKENILPL (66 aa)) enclose the Chromo domain. The active site involves Cys-662.

The protein belongs to the class I-like SAM-binding methyltransferase superfamily. C5-methyltransferase family.

Its subcellular location is the nucleus. The enzyme catalyses a 2'-deoxycytidine in DNA + S-adenosyl-L-methionine = a 5-methyl-2'-deoxycytidine in DNA + S-adenosyl-L-homocysteine + H(+). In terms of biological role, involved in CpXpG DNA methylation. May not play a major role in maintaining CpXpG methylation. This Oryza sativa subsp. japonica (Rice) protein is DNA (cytosine-5)-methyltransferase CMT1.